We begin with the raw amino-acid sequence, 132 residues long: Small ribosomal subunit protein uS8 (132 aa).

This sequence belongs to the universal ribosomal protein uS8 family. As to quaternary structure, part of the 30S ribosomal subunit. Contacts proteins S5 and S12.

One of the primary rRNA binding proteins, it binds directly to 16S rRNA central domain where it helps coordinate assembly of the platform of the 30S subunit. In Brucella ovis (strain ATCC 25840 / 63/290 / NCTC 10512), this protein is Small ribosomal subunit protein uS8.